Here is a 42-residue protein sequence, read N- to C-terminus: Conotoxin Au11.6 (42 aa).

Cystine bridges form between Cys-6–Cys-20, Cys-13–Cys-25, Cys-19–Cys-30, and Cys-24–Cys-37.

This sequence belongs to the conotoxin I1 superfamily. Expressed by the venom duct.

Its subcellular location is the secreted. The protein is Conotoxin Au11.6 of Conus aulicus (Princely cone).